A 418-amino-acid polypeptide reads, in one-letter code: Serine--tRNA ligase (418 aa).

Position 231–233 (231–233) interacts with L-serine; that stretch reads TAE. 262–264 is an ATP binding site; it reads RSE. Glu285 is a binding site for L-serine. Position 349–352 (349–352) interacts with ATP; it reads EISS. Residue Ser385 participates in L-serine binding.

This sequence belongs to the class-II aminoacyl-tRNA synthetase family. Type-1 seryl-tRNA synthetase subfamily. As to quaternary structure, homodimer. The tRNA molecule binds across the dimer.

The protein localises to the cytoplasm. It catalyses the reaction tRNA(Ser) + L-serine + ATP = L-seryl-tRNA(Ser) + AMP + diphosphate + H(+). It carries out the reaction tRNA(Sec) + L-serine + ATP = L-seryl-tRNA(Sec) + AMP + diphosphate + H(+). It participates in aminoacyl-tRNA biosynthesis; selenocysteinyl-tRNA(Sec) biosynthesis; L-seryl-tRNA(Sec) from L-serine and tRNA(Sec): step 1/1. Functionally, catalyzes the attachment of serine to tRNA(Ser). Is also able to aminoacylate tRNA(Sec) with serine, to form the misacylated tRNA L-seryl-tRNA(Sec), which will be further converted into selenocysteinyl-tRNA(Sec). The chain is Serine--tRNA ligase from Ureaplasma parvum serovar 3 (strain ATCC 27815 / 27 / NCTC 11736).